A 77-amino-acid chain; its full sequence is Acyl carrier protein (77 aa).

Positions 2 to 77 (SEKLQKIQAL…DAVAYIEERS (76 aa)) constitute a Carrier domain. Ser-37 is subject to O-(pantetheine 4'-phosphoryl)serine.

This sequence belongs to the acyl carrier protein (ACP) family. Post-translationally, 4'-phosphopantetheine is transferred from CoA to a specific serine of apo-ACP by AcpS. This modification is essential for activity because fatty acids are bound in thioester linkage to the sulfhydryl of the prosthetic group.

The protein resides in the cytoplasm. Its pathway is lipid metabolism; fatty acid biosynthesis. In terms of biological role, carrier of the growing fatty acid chain in fatty acid biosynthesis. This is Acyl carrier protein from Desulforudis audaxviator (strain MP104C).